Consider the following 177-residue polypeptide: MALDELKAAVPDYAKDLRLNLGSVIGNSDLPQQQLWGTVLACAIASRSPRVLRELEPQAKANLSPEAYTAAKSAAAIMAMNNVFYRTRHLLSDPEYGTLRAGLRMNVIGNPGVEKVDFELWSLAVSAVNGCGQCLDSHEQVLRKAGVDRDTIQEAFKIAAVIQAVGTTLDAEAVLAE.

Residue C131 is the Proton donor of the active site. Cysteines 131 and 134 form a disulfide. The active-site Cysteine sulfenic acid (-SOH) intermediate is C134.

This sequence belongs to the AhpD family. In terms of assembly, homotrimer.

It catalyses the reaction N(6)-[(R)-dihydrolipoyl]-L-lysyl-[lipoyl-carrier protein] + a hydroperoxide = N(6)-[(R)-lipoyl]-L-lysyl-[lipoyl-carrier protein] + an alcohol + H2O. In terms of biological role, antioxidant protein with alkyl hydroperoxidase activity. Required for the reduction of the AhpC active site cysteine residues and for the regeneration of the AhpC enzyme activity. This is Alkyl hydroperoxide reductase AhpD from Streptomyces avermitilis (strain ATCC 31267 / DSM 46492 / JCM 5070 / NBRC 14893 / NCIMB 12804 / NRRL 8165 / MA-4680).